The chain runs to 214 residues: Elongation factor Ts (214 aa).

The involved in Mg(2+) ion dislocation from EF-Tu stretch occupies residues 80 to 83 (TDFV).

It belongs to the EF-Ts family.

Its subcellular location is the cytoplasm. In terms of biological role, associates with the EF-Tu.GDP complex and induces the exchange of GDP to GTP. It remains bound to the aminoacyl-tRNA.EF-Tu.GTP complex up to the GTP hydrolysis stage on the ribosome. In Syntrophomonas wolfei subsp. wolfei (strain DSM 2245B / Goettingen), this protein is Elongation factor Ts.